A 920-amino-acid chain; its full sequence is DNA ligase (920 aa).

NAD(+) is bound by residues 90–94, 139–140, and Glu173; these read DAAYD and SL. Catalysis depends on Lys175, which acts as the N6-AMP-lysine intermediate. Residues Arg196, Glu235, Lys360, and Lys384 each contribute to the NAD(+) site. Zn(2+)-binding residues include Cys481, Cys484, Cys500, and Cys506. Residues 662–691 form a disordered region; that stretch reads GEAAIESAETQGDTASETTGAPTGAEAPLG. Polar residues predominate over residues 669–682; it reads AETQGDTASETTGA. The 82-residue stretch at 839 to 920 folds into the BRCT domain; it reads SLPQTLAGKT…FAQLLATGTI (82 aa).

This sequence belongs to the NAD-dependent DNA ligase family. LigA subfamily. The cofactor is Mg(2+). Mn(2+) serves as cofactor.

The enzyme catalyses NAD(+) + (deoxyribonucleotide)n-3'-hydroxyl + 5'-phospho-(deoxyribonucleotide)m = (deoxyribonucleotide)n+m + AMP + beta-nicotinamide D-nucleotide.. In terms of biological role, DNA ligase that catalyzes the formation of phosphodiester linkages between 5'-phosphoryl and 3'-hydroxyl groups in double-stranded DNA using NAD as a coenzyme and as the energy source for the reaction. It is essential for DNA replication and repair of damaged DNA. This is DNA ligase from Bifidobacterium longum (strain DJO10A).